Here is a 253-residue protein sequence, read N- to C-terminus: uncharacterized protein (253 aa).

Serine 145 provides a ligand contact to substrate. The active-site Proton acceptor is the tyrosine 159.

Belongs to the short-chain dehydrogenases/reductases (SDR) family.

This is an uncharacterized protein from Mycobacterium tuberculosis (strain CDC 1551 / Oshkosh).